Here is a 66-residue protein sequence, read N- to C-terminus: UPF0434 protein Jann_0424 (66 aa).

The protein belongs to the UPF0434 family.

The polypeptide is UPF0434 protein Jann_0424 (Jannaschia sp. (strain CCS1)).